A 567-amino-acid polypeptide reads, in one-letter code: DNA-binding protein REPIN1 (567 aa).

The interval 17–52 (PRLLSGPSQESPQTLGKESRGLRQQGTSVAQSGAQA) is disordered. A compositionally biased stretch (polar residues) spans 22–50 (GPSQESPQTLGKESRGLRQQGTSVAQSGA). Ser27 is modified (phosphoserine). The residue at position 30 (Thr30) is a Phosphothreonine. An N6-acetyllysine modification is found at Lys33. The segment at 57–79 (HRCAHCRRHFPGWVALWLHTRRC) adopts a C2H2-type 1; atypical zinc-finger fold. 7 consecutive C2H2-type zinc fingers follow at residues 85–107 (LPCP…RQVH), 116–138 (FACH…LRAH), 145–168 (IACP…RRCH), 177–199 (FICG…KRVH), 236–258 (FQCA…RRVH), 264–286 (HQCP…RRIH), and 292–314 (YPCK…SKIH). Lys276 is subject to N6-acetyllysine. Residues 305 to 315 (PNLLSHSKIHK) show a composition bias toward basic residues. The tract at residues 305 to 372 (PNLLSHSKIH…HPQDPIEAPP (68 aa)) is disordered. The span at 345 to 362 (PAVPLKPAQEPPPGAPPE) shows a compositional bias: pro residues. 7 consecutive C2H2-type zinc fingers follow at residues 375-397 (YSCD…QRQH), 403-425 (FTCA…SRVH), 431-453 (FACE…RRDH), 459-481 (FVCP…RRIH), 487-509 (YVCP…RRIH), 515-537 (YACP…RKSH), and 543-565 (FCCA…QKKH).

As to quaternary structure, homodimers and homomultimers. Found in a complex with RIP60 and RIP100. As to expression, expressed in adipose tissue and bone tissue.

The protein resides in the nucleus. It localises to the cytoplasm. The protein localises to the cytosol. Its function is as follows. Sequence-specific double-stranded DNA-binding protein. Binds ATT-rich and T-rich DNA sequences and facilitates DNA bending. May regulate the expression of genes involved in cellular fatty acid import, including SCARB1/CD36, and genes involved in lipid droplet formation. May regulate the expression of LCN2, and thereby influence iron metabolism and apoptosis-related pathways. May regulate the expression of genes involved in glucose transport. In Homo sapiens (Human), this protein is DNA-binding protein REPIN1 (REPIN1).